Here is a 612-residue protein sequence, read N- to C-terminus: UvrABC system protein C (612 aa).

The region spanning 15-93 (HLPGVYRMYD…IKQHQPKYNV (79 aa)) is the GIY-YIG domain. Residues 203 to 238 (SQVIDYLMQKMEIAASELDFETAARFRDQIQSVRAV) enclose the UVR domain.

This sequence belongs to the UvrC family. As to quaternary structure, interacts with UvrB in an incision complex.

Its subcellular location is the cytoplasm. In terms of biological role, the UvrABC repair system catalyzes the recognition and processing of DNA lesions. UvrC both incises the 5' and 3' sides of the lesion. The N-terminal half is responsible for the 3' incision and the C-terminal half is responsible for the 5' incision. This chain is UvrABC system protein C, found in Haemophilus ducreyi (strain 35000HP / ATCC 700724).